Consider the following 1171-residue polypeptide: ATP-dependent helicase/deoxyribonuclease subunit B (1171 aa).

A UvrD-like helicase ATP-binding domain is found at 1–301 (MSLRFVIGRA…AHLEMHYEAR (301 aa)). Position 8–15 (8–15 (GRAGSGKS)) interacts with ATP. The UvrD-like helicase C-terminal domain maps to 281-587 (MKQPRFHSQA…QFANIPPSLD (307 aa)). Cys805, Cys1129, Cys1132, and Cys1138 together coordinate [4Fe-4S] cluster.

The protein belongs to the helicase family. AddB/RexB type 1 subfamily. In terms of assembly, heterodimer of AddA and AddB. It depends on Mg(2+) as a cofactor. [4Fe-4S] cluster is required as a cofactor.

In terms of biological role, the heterodimer acts as both an ATP-dependent DNA helicase and an ATP-dependent, dual-direction single-stranded exonuclease. Recognizes the chi site generating a DNA molecule suitable for the initiation of homologous recombination. The AddB subunit has 5' -&gt; 3' nuclease activity but not helicase activity. The polypeptide is ATP-dependent helicase/deoxyribonuclease subunit B (Bacillus mycoides (strain KBAB4) (Bacillus weihenstephanensis)).